Reading from the N-terminus, the 267-residue chain is Type III pantothenate kinase (267 aa).

ATP is bound at residue 6–13; it reads DSGNSRLK. Residues Y96 and 103–106 contribute to the substrate site; that span reads GADR. D105 functions as the Proton acceptor in the catalytic mechanism. T131 is an ATP binding site. Residue T181 coordinates substrate.

The protein belongs to the type III pantothenate kinase family. In terms of assembly, homodimer. It depends on NH4(+) as a cofactor. Requires K(+) as cofactor.

Its subcellular location is the cytoplasm. It carries out the reaction (R)-pantothenate + ATP = (R)-4'-phosphopantothenate + ADP + H(+). It functions in the pathway cofactor biosynthesis; coenzyme A biosynthesis; CoA from (R)-pantothenate: step 1/5. Its function is as follows. Catalyzes the phosphorylation of pantothenate (Pan), the first step in CoA biosynthesis. Activates transcription of the pertussis toxin operon in a BvgAS-dependent manner. May interact with the alpha subunit of RNA polymerase. The polypeptide is Type III pantothenate kinase (coaX) (Bordetella pertussis (strain Tohama I / ATCC BAA-589 / NCTC 13251)).